Consider the following 387-residue polypeptide: Putative glutamate--cysteine ligase 2 (387 aa).

The protein belongs to the glutamate--cysteine ligase type 2 family. YbdK subfamily.

The enzyme catalyses L-cysteine + L-glutamate + ATP = gamma-L-glutamyl-L-cysteine + ADP + phosphate + H(+). ATP-dependent carboxylate-amine ligase which exhibits weak glutamate--cysteine ligase activity. This chain is Putative glutamate--cysteine ligase 2, found in Pseudomonas fluorescens (strain ATCC BAA-477 / NRRL B-23932 / Pf-5).